The chain runs to 339 residues: Dihydroorotate dehydrogenase (quinone) (339 aa).

Residues A61–K65 and T85 each bind FMN. K65 is a binding site for substrate. N110–F114 serves as a coordination point for substrate. FMN contacts are provided by N138 and N171. N171 is a binding site for substrate. S174 acts as the Nucleophile in catalysis. A substrate-binding site is contributed by N176. FMN-binding residues include K216 and T244. Residue N245–T246 participates in substrate binding. FMN-binding positions include G267, G296, and Y317 to S318.

It belongs to the dihydroorotate dehydrogenase family. Type 2 subfamily. In terms of assembly, monomer. Requires FMN as cofactor.

The protein localises to the cell membrane. It carries out the reaction (S)-dihydroorotate + a quinone = orotate + a quinol. Its pathway is pyrimidine metabolism; UMP biosynthesis via de novo pathway; orotate from (S)-dihydroorotate (quinone route): step 1/1. In terms of biological role, catalyzes the conversion of dihydroorotate to orotate with quinone as electron acceptor. This Pseudomonas fluorescens (strain ATCC BAA-477 / NRRL B-23932 / Pf-5) protein is Dihydroorotate dehydrogenase (quinone).